Here is a 158-residue protein sequence, read N- to C-terminus: MAKERGQKVVATNRRARHDYTIEDTYEAGLVLTGTEVKSLRLGRASLVDGYAFVDGGEAWLDAVHIPEYADGTWNNHAPRRKRKLLLHKAQILKIESKVKQGGYTIVPLQIYFNDGRAKVEIGVAKGKREYDKRQALRERQDNREAQRAMASRKHLGE.

Basic and acidic residues predominate over residues 133-147 (KRQALRERQDNREAQ). The disordered stretch occupies residues 133 to 158 (KRQALRERQDNREAQRAMASRKHLGE).

It belongs to the SmpB family.

It localises to the cytoplasm. In terms of biological role, required for rescue of stalled ribosomes mediated by trans-translation. Binds to transfer-messenger RNA (tmRNA), required for stable association of tmRNA with ribosomes. tmRNA and SmpB together mimic tRNA shape, replacing the anticodon stem-loop with SmpB. tmRNA is encoded by the ssrA gene; the 2 termini fold to resemble tRNA(Ala) and it encodes a 'tag peptide', a short internal open reading frame. During trans-translation Ala-aminoacylated tmRNA acts like a tRNA, entering the A-site of stalled ribosomes, displacing the stalled mRNA. The ribosome then switches to translate the ORF on the tmRNA; the nascent peptide is terminated with the 'tag peptide' encoded by the tmRNA and targeted for degradation. The ribosome is freed to recommence translation, which seems to be the essential function of trans-translation. This chain is SsrA-binding protein, found in Leifsonia xyli subsp. xyli (strain CTCB07).